The sequence spans 178 residues: ATP-dependent protease subunit HslV (178 aa).

Threonine 7 is a catalytic residue. Residues glycine 162, cysteine 165, and threonine 168 each coordinate Na(+).

It belongs to the peptidase T1B family. HslV subfamily. In terms of assembly, a double ring-shaped homohexamer of HslV is capped on each side by a ring-shaped HslU homohexamer. The assembly of the HslU/HslV complex is dependent on binding of ATP.

It is found in the cytoplasm. It catalyses the reaction ATP-dependent cleavage of peptide bonds with broad specificity.. Allosterically activated by HslU binding. Its function is as follows. Protease subunit of a proteasome-like degradation complex believed to be a general protein degrading machinery. The protein is ATP-dependent protease subunit HslV of Burkholderia orbicola (strain AU 1054).